A 106-amino-acid polypeptide reads, in one-letter code: Large ribosomal subunit protein uL24 (106 aa).

Residues 84–97 are compositionally biased toward basic and acidic residues; the sequence is EKIGRELGAKEKAR. The disordered stretch occupies residues 84 to 106; that stretch reads EKIGRELGAKEKARLQKRKAAAK.

It belongs to the universal ribosomal protein uL24 family. Part of the 50S ribosomal subunit.

Its function is as follows. One of two assembly initiator proteins, it binds directly to the 5'-end of the 23S rRNA, where it nucleates assembly of the 50S subunit. One of the proteins that surrounds the polypeptide exit tunnel on the outside of the subunit. This Anaeromyxobacter dehalogenans (strain 2CP-C) protein is Large ribosomal subunit protein uL24.